Reading from the N-terminus, the 203-residue chain is Histidine biosynthesis bifunctional protein HisIE (203 aa).

The interval 1–114 is phosphoribosyl-AMP cyclohydrolase; the sequence is MLTEQQRREL…FGDTAHQWLF (114 aa). Residues 115–203 form a phosphoribosyl-ATP pyrophosphohydrolase region; the sequence is LYQLEQLLAE…VIENLRKRHQ (89 aa).

The protein in the N-terminal section; belongs to the PRA-CH family. This sequence in the C-terminal section; belongs to the PRA-PH family.

The protein localises to the cytoplasm. The enzyme catalyses 1-(5-phospho-beta-D-ribosyl)-ATP + H2O = 1-(5-phospho-beta-D-ribosyl)-5'-AMP + diphosphate + H(+). It catalyses the reaction 1-(5-phospho-beta-D-ribosyl)-5'-AMP + H2O = 1-(5-phospho-beta-D-ribosyl)-5-[(5-phospho-beta-D-ribosylamino)methylideneamino]imidazole-4-carboxamide. The protein operates within amino-acid biosynthesis; L-histidine biosynthesis; L-histidine from 5-phospho-alpha-D-ribose 1-diphosphate: step 2/9. It participates in amino-acid biosynthesis; L-histidine biosynthesis; L-histidine from 5-phospho-alpha-D-ribose 1-diphosphate: step 3/9. The polypeptide is Histidine biosynthesis bifunctional protein HisIE (Escherichia coli O6:H1 (strain CFT073 / ATCC 700928 / UPEC)).